A 171-amino-acid chain; its full sequence is Large ribosomal subunit protein uL10 (171 aa).

Belongs to the universal ribosomal protein uL10 family. In terms of assembly, part of the ribosomal stalk of the 50S ribosomal subunit. The N-terminus interacts with L11 and the large rRNA to form the base of the stalk. The C-terminus forms an elongated spine to which L12 dimers bind in a sequential fashion forming a multimeric L10(L12)X complex.

Forms part of the ribosomal stalk, playing a central role in the interaction of the ribosome with GTP-bound translation factors. The protein is Large ribosomal subunit protein uL10 of Cereibacter sphaeroides (strain ATCC 17023 / DSM 158 / JCM 6121 / CCUG 31486 / LMG 2827 / NBRC 12203 / NCIMB 8253 / ATH 2.4.1.) (Rhodobacter sphaeroides).